We begin with the raw amino-acid sequence, 287 residues long: Shikimate dehydrogenase (NADP(+)) (287 aa).

Shikimate-binding positions include serine 21–serine 23 and threonine 68. The Proton acceptor role is filled by lysine 72. Asparagine 93 and aspartate 109 together coordinate shikimate. NADP(+) is bound by residues glycine 133 to alanine 137, asparagine 157 to lysine 162, and methionine 226. Tyrosine 228 contributes to the shikimate binding site. Glycine 250 contributes to the NADP(+) binding site.

Belongs to the shikimate dehydrogenase family. In terms of assembly, homodimer.

It carries out the reaction shikimate + NADP(+) = 3-dehydroshikimate + NADPH + H(+). The protein operates within metabolic intermediate biosynthesis; chorismate biosynthesis; chorismate from D-erythrose 4-phosphate and phosphoenolpyruvate: step 4/7. Involved in the biosynthesis of the chorismate, which leads to the biosynthesis of aromatic amino acids. Catalyzes the reversible NADPH linked reduction of 3-dehydroshikimate (DHSA) to yield shikimate (SA). The protein is Shikimate dehydrogenase (NADP(+)) of Shewanella oneidensis (strain ATCC 700550 / JCM 31522 / CIP 106686 / LMG 19005 / NCIMB 14063 / MR-1).